The sequence spans 254 residues: 3-deoxy-manno-octulosonate cytidylyltransferase (254 aa).

The protein belongs to the KdsB family.

It is found in the cytoplasm. It catalyses the reaction 3-deoxy-alpha-D-manno-oct-2-ulosonate + CTP = CMP-3-deoxy-beta-D-manno-octulosonate + diphosphate. It participates in nucleotide-sugar biosynthesis; CMP-3-deoxy-D-manno-octulosonate biosynthesis; CMP-3-deoxy-D-manno-octulosonate from 3-deoxy-D-manno-octulosonate and CTP: step 1/1. Its pathway is bacterial outer membrane biogenesis; lipopolysaccharide biosynthesis. Its function is as follows. Activates KDO (a required 8-carbon sugar) for incorporation into bacterial lipopolysaccharide in Gram-negative bacteria. The sequence is that of 3-deoxy-manno-octulosonate cytidylyltransferase from Chlamydia felis (strain Fe/C-56) (Chlamydophila felis).